Reading from the N-terminus, the 545-residue chain is MAEEANKDADISSLSLSLDPEIIGGQNNFLENNLQQIFQKIIQERGPFRDLKEEDLQKELQKESIKDESSAKSSETENVLEFATLDSKRNVNDTEVESMDSQAYKKELIEQIMIAQTECSLALDMTSLLLSKFKENSIETISPFLKSTVPPSSLQFSRSQPPESKESDATLAKCWKEKSLTSSCKFLFEAKERLTSVVETEHEYYTELVKVKEASWPLFNSQGSNHLSVQYSCLGGISLGLGLIRMKPESKSFEVQSSLLYSQAALKISILNKDRDEIGSSTWSWPSQNCNSVLLKDIYKLQEILFEMDIWNSLLQEAQSCGNQGVNFTGDEILVPISDDHVVRITLETSSKNTESGFTEDKKSNEDTSTNFVTIKQEKELLKCLCDTLNAIAHILFLKHCRKSDRRSQQPELYMAIDANAPLILRPLIFYYNLNQESLEFQRWLKQRDISFKFMPNYPWEKAKDFLELENSLSINRLSISWRIMVSNFEPAIFIQHTPTLHGTDKSVWRCKDQYSSNQFSSLKNVCQYIEHHINSLSRRSKKTE.

The interval 148–168 (TVPPSSLQFSRSQPPESKESD) is disordered. Over residues 149–162 (VPPSSLQFSRSQPP) the composition is skewed to polar residues.

Belongs to the Mediator complex subunit 17 family. As to quaternary structure, component of the Mediator complex. Interacts with med18, prk1 and rbp1.

It is found in the nucleus. In terms of biological role, component of the Mediator complex, a coactivator involved in the regulated transcription of nearly all RNA polymerase II-dependent genes. Mediator functions as a bridge to convey information from gene-specific regulatory proteins to the basal RNA polymerase II transcription machinery. Mediator is recruited to promoters by direct interactions with regulatory proteins and serves as a scaffold for the assembly of a functional preinitiation complex with RNA polymerase II and the general transcription factors. This chain is Mediator of RNA polymerase II transcription subunit 17 (med17), found in Schizosaccharomyces pombe (strain 972 / ATCC 24843) (Fission yeast).